The sequence spans 553 residues: Chaperonin GroEL (553 aa).

ATP is bound by residues 29–32 (TLGP), lysine 50, 86–90 (DGTTT), glycine 424, and aspartate 504.

It belongs to the chaperonin (HSP60) family. As to quaternary structure, forms a cylinder of 14 subunits composed of two heptameric rings stacked back-to-back. Interacts with the co-chaperonin GroES.

Its subcellular location is the cytoplasm. It catalyses the reaction ATP + H2O + a folded polypeptide = ADP + phosphate + an unfolded polypeptide.. Together with its co-chaperonin GroES, plays an essential role in assisting protein folding. The GroEL-GroES system forms a nano-cage that allows encapsulation of the non-native substrate proteins and provides a physical environment optimized to promote and accelerate protein folding. The chain is Chaperonin GroEL from Koribacter versatilis (strain Ellin345).